Consider the following 329-residue polypeptide: Adenylate isopentenyltransferase 7, mitochondrial (329 aa).

A mitochondrion-targeting transit peptide spans 1-40 (MKFSISSLKQVQPILCFKNKLSKVNVNSFLHPKEKVIFVM). Residue 41–48 (GATGSGKS) coordinates ATP.

This sequence belongs to the IPP transferase family. As to expression, expressed in both the vascular stele and the phloem companion cells of the root, in endodermis of the root elongation zone, trichomes on young leaves, and some pollen tubes.

The protein localises to the mitochondrion. The enzyme catalyses dimethylallyl diphosphate + ADP = N(6)-(dimethylallyl)adenosine 5'-diphosphate + diphosphate. The catalysed reaction is dimethylallyl diphosphate + ATP = N(6)-(dimethylallyl)adenosine 5'-triphosphate + diphosphate. Functionally, involved in cytokinin biosynthesis. Catalyzes the transfer of an isopentenyl group from dimethylallyl diphosphate (DMAPP) to ATP and ADP. The protein is Adenylate isopentenyltransferase 7, mitochondrial (IPT7) of Arabidopsis thaliana (Mouse-ear cress).